The following is a 369-amino-acid chain: Uroporphyrinogen decarboxylase (369 aa).

Residues 28–32 (RQAGR), D78, Y154, S209, and H339 contribute to the substrate site.

This sequence belongs to the uroporphyrinogen decarboxylase family. In terms of assembly, homodimer.

The protein localises to the cytoplasm. The catalysed reaction is uroporphyrinogen III + 4 H(+) = coproporphyrinogen III + 4 CO2. It participates in porphyrin-containing compound metabolism; protoporphyrin-IX biosynthesis; coproporphyrinogen-III from 5-aminolevulinate: step 4/4. Its function is as follows. Catalyzes the decarboxylation of four acetate groups of uroporphyrinogen-III to yield coproporphyrinogen-III. This is Uroporphyrinogen decarboxylase from Polaromonas sp. (strain JS666 / ATCC BAA-500).